The following is a 325-amino-acid chain: Lipoyl synthase (325 aa).

Residues 1–31 form a disordered region; the sequence is MASDSDLLDTKPAETRHPEKAHRPDQPTLRK. Residues 8–31 show a composition bias toward basic and acidic residues; the sequence is LDTKPAETRHPEKAHRPDQPTLRK. Residues Cys61, Cys66, Cys72, Cys87, Cys91, Cys94, and Ser300 each contribute to the [4Fe-4S] cluster site. The Radical SAM core domain maps to 73-289; it reads WAKKHATFMI…AEIGRAKGFL (217 aa).

This sequence belongs to the radical SAM superfamily. Lipoyl synthase family. [4Fe-4S] cluster is required as a cofactor.

It localises to the cytoplasm. It catalyses the reaction [[Fe-S] cluster scaffold protein carrying a second [4Fe-4S](2+) cluster] + N(6)-octanoyl-L-lysyl-[protein] + 2 oxidized [2Fe-2S]-[ferredoxin] + 2 S-adenosyl-L-methionine + 4 H(+) = [[Fe-S] cluster scaffold protein] + N(6)-[(R)-dihydrolipoyl]-L-lysyl-[protein] + 4 Fe(3+) + 2 hydrogen sulfide + 2 5'-deoxyadenosine + 2 L-methionine + 2 reduced [2Fe-2S]-[ferredoxin]. It functions in the pathway protein modification; protein lipoylation via endogenous pathway; protein N(6)-(lipoyl)lysine from octanoyl-[acyl-carrier-protein]: step 2/2. Functionally, catalyzes the radical-mediated insertion of two sulfur atoms into the C-6 and C-8 positions of the octanoyl moiety bound to the lipoyl domains of lipoate-dependent enzymes, thereby converting the octanoylated domains into lipoylated derivatives. The protein is Lipoyl synthase of Methylocella silvestris (strain DSM 15510 / CIP 108128 / LMG 27833 / NCIMB 13906 / BL2).